Reading from the N-terminus, the 197-residue chain is Small ribosomal subunit protein uS4y (197 aa).

One can recognise an S4 RNA-binding domain in the interval 109–183 (RRLQTIVFKS…VKRRNERAGA (75 aa)). A disordered region spans residues 161–197 (SLTSPFGGGRPGRVKRRNERAGAKKASGGDGDEDDEE).

It belongs to the universal ribosomal protein uS4 family. Binds to the translation initiation factors TIF3E1.

The protein is Small ribosomal subunit protein uS4y (RPS9C) of Arabidopsis thaliana (Mouse-ear cress).